We begin with the raw amino-acid sequence, 163 residues long: Cyclic pyranopterin monophosphate synthase (163 aa).

Residues 74–76 and 111–112 contribute to the substrate site; these read MCH and ME. The active site involves D126.

It belongs to the MoaC family. As to quaternary structure, homohexamer; trimer of dimers.

It carries out the reaction (8S)-3',8-cyclo-7,8-dihydroguanosine 5'-triphosphate = cyclic pyranopterin phosphate + diphosphate. It participates in cofactor biosynthesis; molybdopterin biosynthesis. Functionally, catalyzes the conversion of (8S)-3',8-cyclo-7,8-dihydroguanosine 5'-triphosphate to cyclic pyranopterin monophosphate (cPMP). This chain is Cyclic pyranopterin monophosphate synthase, found in Desulfitobacterium hafniense (strain DSM 10664 / DCB-2).